The primary structure comprises 117 residues: Large ribosomal subunit protein bL20 (117 aa).

It belongs to the bacterial ribosomal protein bL20 family.

In terms of biological role, binds directly to 23S ribosomal RNA and is necessary for the in vitro assembly process of the 50S ribosomal subunit. It is not involved in the protein synthesizing functions of that subunit. This chain is Large ribosomal subunit protein bL20, found in Rickettsia rickettsii (strain Iowa).